The chain runs to 412 residues: Multifunctional CCA protein (412 aa).

Glycine 8 and arginine 11 together coordinate ATP. 2 residues coordinate CTP: glycine 8 and arginine 11. Mg(2+) contacts are provided by aspartate 21 and aspartate 23. Residues arginine 91, arginine 137, and arginine 140 each contribute to the ATP site. Arginine 91, arginine 137, and arginine 140 together coordinate CTP. One can recognise an HD domain in the interval 228-329 (TGIHTLMTLS…VKLFDSIDAW (102 aa)).

This sequence belongs to the tRNA nucleotidyltransferase/poly(A) polymerase family. Bacterial CCA-adding enzyme type 1 subfamily. In terms of assembly, monomer. Can also form homodimers and oligomers. It depends on Mg(2+) as a cofactor. Requires Ni(2+) as cofactor.

It catalyses the reaction a tRNA precursor + 2 CTP + ATP = a tRNA with a 3' CCA end + 3 diphosphate. It carries out the reaction a tRNA with a 3' CCA end + 2 CTP + ATP = a tRNA with a 3' CCACCA end + 3 diphosphate. Functionally, catalyzes the addition and repair of the essential 3'-terminal CCA sequence in tRNAs without using a nucleic acid template. Adds these three nucleotides in the order of C, C, and A to the tRNA nucleotide-73, using CTP and ATP as substrates and producing inorganic pyrophosphate. tRNA 3'-terminal CCA addition is required both for tRNA processing and repair. Also involved in tRNA surveillance by mediating tandem CCA addition to generate a CCACCA at the 3' terminus of unstable tRNAs. While stable tRNAs receive only 3'-terminal CCA, unstable tRNAs are marked with CCACCA and rapidly degraded. This chain is Multifunctional CCA protein, found in Shigella sonnei (strain Ss046).